The chain runs to 292 residues: Zinc finger protein OZF (292 aa).

10 C2H2-type zinc fingers span residues 16 to 38, 44 to 66, 72 to 94, 100 to 122, 128 to 150, 156 to 178, 184 to 206, 212 to 234, 240 to 262, and 268 to 290; these read FACK…EHFH, FECN…QSTH, FECS…QKIH, FECK…QRTH, FICK…EKIH, FKCN…QNIH, YECN…VRIH, YECN…VRSH, YGCN…LRIH, and YQCS…QKIH. Glycyl lysine isopeptide (Lys-Gly) (interchain with G-Cter in SUMO2) cross-links involve residues lysine 28, lysine 51, and lysine 56. Glycyl lysine isopeptide (Lys-Gly) (interchain with G-Cter in SUMO) cross-links involve residues lysine 157 and lysine 169. A Glycyl lysine isopeptide (Lys-Gly) (interchain with G-Cter in SUMO2) cross-link involves residue lysine 173. Residues 212 to 292 form an interaction with TERF2IP region; it reads YECNVCGKAF…HIRHQKIHTH (81 aa).

The protein belongs to the krueppel C2H2-type zinc-finger protein family. In terms of assembly, binds DNA. Interacts with SUMO conjugating enzyme UBC9/UBE2I. Interacts with the telomeric protein TERF2IP. As to expression, expressed in heart, brain, liver, lung, skeletal muscle and kidney, and at much lower level in spleen and testicle. Expressed in lactating mammary gland.

Its subcellular location is the nucleus. The sequence is that of Zinc finger protein OZF (Znf146) from Mus musculus (Mouse).